A 224-amino-acid polypeptide reads, in one-letter code: Putative adhesin A1G_07050 (224 aa).

Residues 1-22 form the signal peptide; the sequence is MKKLLLIAATSATILSSSVSFA.

The polypeptide is Putative adhesin A1G_07050 (Rickettsia rickettsii (strain Sheila Smith)).